The following is a 188-amino-acid chain: Ras-related protein Rap-1 (188 aa).

A GTP-binding site is contributed by 12-19 (GSGGVGKS). The Effector region motif lies at 34 to 42 (YDPTIEDSY). Residues 59–63 (DTAGT) and 118–121 (NKCD) contribute to the GTP site. At cysteine 185 the chain carries Cysteine methyl ester. A lipid anchor (S-geranylgeranyl cysteine) is attached at cysteine 185. A propeptide spans 186 to 188 (ILL) (removed in mature form).

Belongs to the small GTPase superfamily. Ras family.

It is found in the cell membrane. It catalyses the reaction GTP + H2O = GDP + phosphate + H(+). The chain is Ras-related protein Rap-1 (RAP1) from Physarum polycephalum (Slime mold).